The sequence spans 1077 residues: Serine/threonine-protein kinase sel-5 (1077 aa).

In terms of domain architecture, Protein kinase spans 47-317; sequence VTIEKQIAEG…IYQTSVLAFE (271 aa). Residues 53-61 and lysine 75 contribute to the ATP site; that span reads IAEGGFAIV. The active-site Proton acceptor is the aspartate 178. Disordered regions lie at residues 347–444, 488–554, 616–813, and 920–1077; these read MRDG…TDGS, GFTD…SQVV, ELDS…TNPF, and LISV…PTDL. The span at 369–399 shows a compositional bias: polar residues; the sequence is IQSSSKMASLSQQVPSISNISMPSGSGTVET. A compositionally biased stretch (basic and acidic residues) spans 491 to 515; it reads DLDKPALPRDRAQTDGKRRLPHESD. Positions 541–554 are enriched in low complexity; it reads SSQQTTSKTSSQVV. The segment covering 638–648 has biased composition (polar residues); sequence LTVSTSSSAQP. The span at 655–679 shows a compositional bias: acidic residues; it reads TDEDDERQLLSETDEEEKYEIDEKE. Composition is skewed to basic and acidic residues over residues 697 to 708 and 739 to 751; these read DEQRMNDRRRYS and DSRR…HDED. A compositionally biased stretch (acidic residues) spans 770–780; the sequence is EDDGLEDDDDH. The segment covering 799–810 has biased composition (polar residues); sequence GTSTPHTQNPIT. The segment covering 927–936 has biased composition (pro residues); sequence TDPPPPPLPK. A compositionally biased stretch (polar residues) spans 941–950; that stretch reads ASPTQETTAT. A compositionally biased stretch (basic residues) spans 960 to 969; the sequence is KLLKKEKKKE. The segment covering 970–989 has biased composition (basic and acidic residues); it reads KKDGKKDKLKLEEYREKGSS. Polar residues predominate over residues 1054–1067; that stretch reads LTGKNASFVNTSFQ.

Belongs to the protein kinase superfamily. Ser/Thr protein kinase family. Mg(2+) is required as a cofactor.

The protein resides in the cytoplasm. It carries out the reaction L-seryl-[protein] + ATP = O-phospho-L-seryl-[protein] + ADP + H(+). The catalysed reaction is L-threonyl-[protein] + ATP = O-phospho-L-threonyl-[protein] + ADP + H(+). Serine/threonine-protein kinase which may play a role in lin-12-mediated cell-fate decisions. The polypeptide is Serine/threonine-protein kinase sel-5 (Caenorhabditis elegans).